The following is a 173-amino-acid chain: Shikimate kinase 1 (173 aa).

Residue 14 to 19 (GAGKST) participates in ATP binding. Position 18 (Ser-18) interacts with Mg(2+). The substrate site is built by Asp-36, Arg-60, and Gly-82. Arg-120 provides a ligand contact to ATP. Residue Arg-140 coordinates substrate. Gln-157 is a binding site for ATP.

This sequence belongs to the shikimate kinase family. In terms of assembly, monomer. Requires Mg(2+) as cofactor.

It localises to the cytoplasm. It carries out the reaction shikimate + ATP = 3-phosphoshikimate + ADP + H(+). It functions in the pathway metabolic intermediate biosynthesis; chorismate biosynthesis; chorismate from D-erythrose 4-phosphate and phosphoenolpyruvate: step 5/7. Functionally, catalyzes the specific phosphorylation of the 3-hydroxyl group of shikimic acid using ATP as a cosubstrate. The sequence is that of Shikimate kinase 1 from Yersinia pseudotuberculosis serotype O:1b (strain IP 31758).